Here is a 239-residue protein sequence, read N- to C-terminus: 2,3,4,5-tetrahydropyridine-2,6-dicarboxylate N-acetyltransferase (239 aa).

Belongs to the transferase hexapeptide repeat family. DapH subfamily.

It catalyses the reaction (S)-2,3,4,5-tetrahydrodipicolinate + acetyl-CoA + H2O = L-2-acetamido-6-oxoheptanedioate + CoA. The protein operates within amino-acid biosynthesis; L-lysine biosynthesis via DAP pathway; LL-2,6-diaminopimelate from (S)-tetrahydrodipicolinate (acetylase route): step 1/3. Functionally, catalyzes the transfer of an acetyl group from acetyl-CoA to tetrahydrodipicolinate. The protein is 2,3,4,5-tetrahydropyridine-2,6-dicarboxylate N-acetyltransferase of Staphylococcus aureus (strain Newman).